A 502-amino-acid chain; its full sequence is Glycerol kinase (502 aa).

T14 lines the ADP pocket. T14, T15, and S16 together coordinate ATP. T14 is a sn-glycerol 3-phosphate binding site. Residue R18 coordinates ADP. Sn-glycerol 3-phosphate-binding residues include R84, E85, Y136, and D246. R84, E85, Y136, D246, and Q247 together coordinate glycerol. Residues T268 and G311 each coordinate ADP. ATP contacts are provided by T268, G311, Q315, and G412. G412 and N416 together coordinate ADP.

Belongs to the FGGY kinase family. Homotetramer and homodimer (in equilibrium). Heterodimer with EIIA-Glc. Binds 1 zinc ion per glycerol kinase EIIA-Glc dimer. The zinc ion is important for dimerization.

The catalysed reaction is glycerol + ATP = sn-glycerol 3-phosphate + ADP + H(+). The protein operates within polyol metabolism; glycerol degradation via glycerol kinase pathway; sn-glycerol 3-phosphate from glycerol: step 1/1. Its activity is regulated as follows. Activity of this regulatory enzyme is affected by several metabolites. Allosterically and non-competitively inhibited by fructose 1,6-bisphosphate (FBP) and unphosphorylated phosphocarrier protein EIIA-Glc (III-Glc), an integral component of the bacterial phosphotransferase (PTS) system. Functionally, key enzyme in the regulation of glycerol uptake and metabolism. Catalyzes the phosphorylation of glycerol to yield sn-glycerol 3-phosphate. This Enterobacter sp. (strain 638) protein is Glycerol kinase.